A 114-amino-acid chain; its full sequence is Transmembrane protein 14DP (114 aa).

4 helical membrane-spanning segments follow: residues 8–28, 36–56, 63–80, and 83–103; these read LVPL…GGIV, APSL…AYQL, VWDF…IMGM, and YYYG…LMAA.

This sequence belongs to the TMEM14 family.

The protein resides in the membrane. This is Transmembrane protein 14DP (TMEM14DP) from Homo sapiens (Human).